A 78-amino-acid polypeptide reads, in one-letter code: Small ribosomal subunit protein eS21 (78 aa).

This sequence belongs to the eukaryotic ribosomal protein eS21 family.

The protein is Small ribosomal subunit protein eS21 (rps21) of Dictyostelium discoideum (Social amoeba).